The following is a 445-amino-acid chain: MSERKFFGTDGIRGKVGSGQMTPELALKLGWAAGRVLSRSGTKKVIIGKDTRISGYMFESALEAGLSAAGLNVMLMGPMPTPAVAYLTRTFRAEAGVVISASHNPYYDNGIKFFSTDGSKLDDNLELEIEAELEKPLECVESHLLGKVSRIEDARGRYIEYCKGNFPADQTLTGLKIVVDCAHGATYHIAPAVFRELGAEVIAIGDKPNGVNINDKVGATSMAKICETVLTEGADLGIALDGDGDRIMMVNSRGEVIDGDQILYILACDAKARGVLRGGVVGTLMSNLGLDLALQALDIPFARSKVGDRYVMELLKELDWRIGGENSGHILNLDHGTTGDGIVAGILVLAAMRRQNATLEQLTAPMEMLPQVLVNVRFEGEHDPLSSDKVKAAQAQVESELGARGRVLLRKSGTEPLIRVMVEGDDHNTVLAHANLIADAVKSAS.

The active-site Phosphoserine intermediate is serine 102. Residues serine 102, aspartate 241, aspartate 243, and aspartate 245 each contribute to the Mg(2+) site. Serine 102 bears the Phosphoserine mark.

Belongs to the phosphohexose mutase family. The cofactor is Mg(2+). Activated by phosphorylation.

It catalyses the reaction alpha-D-glucosamine 1-phosphate = D-glucosamine 6-phosphate. Its function is as follows. Catalyzes the conversion of glucosamine-6-phosphate to glucosamine-1-phosphate. This Shewanella sp. (strain ANA-3) protein is Phosphoglucosamine mutase.